The following is a 184-amino-acid chain: Ribosome-recycling factor (184 aa).

The protein belongs to the RRF family.

Its subcellular location is the cytoplasm. Functionally, responsible for the release of ribosomes from messenger RNA at the termination of protein biosynthesis. May increase the efficiency of translation by recycling ribosomes from one round of translation to another. This Mycoplasma pneumoniae (strain ATCC 29342 / M129 / Subtype 1) (Mycoplasmoides pneumoniae) protein is Ribosome-recycling factor.